A 519-amino-acid polypeptide reads, in one-letter code: Sorting nexin-2 (519 aa).

A compositionally biased stretch (low complexity) spans 30 to 50; that stretch reads STVSTLESSPSSPEPASLPAE. The segment at 30-62 is disordered; the sequence is STVSTLESSPSSPEPASLPAEDISANSNGSKPV. Ser-97 bears the Phosphoserine mark. Residues Thr-101 and Thr-104 each carry the phosphothreonine modification. Residues Ser-117 and Ser-119 each carry the phosphoserine modification. In terms of domain architecture, PX spans 140–269; that stretch reads FDIEIGVSDP…QFLESSELPR (130 aa). The a 1,2-diacyl-sn-glycero-3-phospho-(1D-myo-inositol-3-phosphate) site is built by Arg-183, Ser-185, Lys-211, and Arg-235. A Phosphoserine modification is found at Ser-185. Positions 260 to 519 are interaction with RhoG; sequence QFLESSELPR…AFLPEAKAIA (260 aa). Ser-277 bears the Phosphoserine mark. The segment at 278–295 is membrane-binding amphipathic helix; that stretch reads GAGILRMVNKAADAVNKM. The region spanning 299–519 is the BAR domain; that stretch reads MNESDAWFEE…AFLPEAKAIA (221 aa). Lys-469 is subject to N6-acetyllysine.

Belongs to the sorting nexin family. In terms of assembly, predominantly forms heterodimers with BAR domain-containing sorting nexins SNX5, SNX6 and SNX32; can self-associate to form homodimers. The heterodimers are proposed to self-assemble into helical arrays on the membrane to stabilize and expand local membrane curvature underlying endosomal tubule formation. Thought to be a component of the originally described retromer complex (also called SNX-BAR retromer) which is a pentamer containing the heterotrimeric retromer cargo-selective complex (CSC), also described as vacuolar protein sorting subcomplex (VPS), and a heterodimeric membrane-deforming subcomplex formed between SNX1 or SNX2 and SNX5 or SNX6 (also called SNX-BAR subcomplex); the respective CSC and SNX-BAR subcomplexes associate with low affinity. Interacts with SNX5, SNX6, SNX32, VPS26A, VPS29, VPS35, FNBP1, KALRN, RHOG (GDP-bound form).

Its subcellular location is the early endosome membrane. The protein localises to the cell projection. It is found in the lamellipodium. Involved in several stages of intracellular trafficking. Interacts with membranes containing phosphatidylinositol 3-phosphate (PtdIns(3P)) or phosphatidylinositol 3,5-bisphosphate (PtdIns(3,5)P2). Acts in part as component of the retromer membrane-deforming SNX-BAR subcomplex. The SNX-BAR retromer mediates retrograde transport of cargo proteins from endosomes to the trans-Golgi network (TGN) and is involved in endosome-to-plasma membrane transport for cargo protein recycling. The SNX-BAR subcomplex functions to deform the donor membrane into a tubular profile called endosome-to-TGN transport carrier (ETC). Can sense membrane curvature and has in vitro vesicle-to-membrane remodeling activity. Required for retrograde endosome-to-TGN transport of TGN38. Promotes KALRN- and RHOG-dependent but retromer-independent membrane remodeling such as lamellipodium formation; the function is dependent on GEF activity of KALRN. This chain is Sorting nexin-2 (Snx2), found in Mus musculus (Mouse).